A 351-amino-acid polypeptide reads, in one-letter code: MENNILELRNVTKEYDGQVVLKGISFNVKEGEFITLLGPSGCGKTTILKIIGGSQKPNSGEILFEDKNLIPIPINKRQFNTIFQSYALFPHLNVFDNVAFGLTIKKTKKDIIEREVMRQIRQVGLEGYENKKIDELSGGQKQRVAIARALVMKPKVLLLDEPMAALDVKLRKTMQEELKRLQQDIGITFIMVSHDQEEALSMSDRIVVMNQGTIQQIGTPEEIYNEPENAWVANFIGSSNIITDGIFLEDNKIKFDGKVFECIDTNFGENESSIDIIIRPEDIIIKNPNNGFFNAKVIKTTFKGIHWEVVVETSKKRQWIIHTINEYDIDQQVSIKWKPANVHVMWKEVDN.

An ABC transporter domain is found at 6–236; sequence LELRNVTKEY…PENAWVANFI (231 aa). Position 38–45 (38–45) interacts with ATP; that stretch reads GPSGCGKT.

It belongs to the ABC transporter superfamily. Spermidine/putrescine importer (TC 3.A.1.11.1) family. As to quaternary structure, the complex is composed of two ATP-binding proteins (PotA), two transmembrane proteins (PotB and PotC) and a solute-binding protein (PotD).

It localises to the cell membrane. The enzyme catalyses ATP + H2O + polyamine-[polyamine-binding protein]Side 1 = ADP + phosphate + polyamineSide 2 + [polyamine-binding protein]Side 1.. In terms of biological role, part of the ABC transporter complex PotABCD involved in spermidine/putrescine import. Responsible for energy coupling to the transport system. The chain is Spermidine/putrescine import ATP-binding protein PotA from Mycoplasma capricolum subsp. capricolum (strain California kid / ATCC 27343 / NCTC 10154).